A 346-amino-acid polypeptide reads, in one-letter code: Nicotinate-nucleotide--dimethylbenzimidazole phosphoribosyltransferase (346 aa).

The Proton acceptor role is filled by E313.

It belongs to the CobT family.

It catalyses the reaction 5,6-dimethylbenzimidazole + nicotinate beta-D-ribonucleotide = alpha-ribazole 5'-phosphate + nicotinate + H(+). Its pathway is nucleoside biosynthesis; alpha-ribazole biosynthesis; alpha-ribazole from 5,6-dimethylbenzimidazole: step 1/2. In terms of biological role, catalyzes the synthesis of alpha-ribazole-5'-phosphate from nicotinate mononucleotide (NAMN) and 5,6-dimethylbenzimidazole (DMB). In Parabacteroides distasonis (strain ATCC 8503 / DSM 20701 / CIP 104284 / JCM 5825 / NCTC 11152), this protein is Nicotinate-nucleotide--dimethylbenzimidazole phosphoribosyltransferase.